The following is a 298-amino-acid chain: Aspartate carbamoyltransferase catalytic subunit (298 aa).

Positions 53 and 54 each coordinate carbamoyl phosphate. Position 81 (K81) interacts with L-aspartate. Positions 103, 132, and 135 each coordinate carbamoyl phosphate. L-aspartate contacts are provided by R166 and R218. Residues G259 and P260 each coordinate carbamoyl phosphate.

It belongs to the aspartate/ornithine carbamoyltransferase superfamily. ATCase family. Heterododecamer (2C3:3R2) of six catalytic PyrB chains organized as two trimers (C3), and six regulatory PyrI chains organized as three dimers (R2).

It carries out the reaction carbamoyl phosphate + L-aspartate = N-carbamoyl-L-aspartate + phosphate + H(+). It participates in pyrimidine metabolism; UMP biosynthesis via de novo pathway; (S)-dihydroorotate from bicarbonate: step 2/3. Catalyzes the condensation of carbamoyl phosphate and aspartate to form carbamoyl aspartate and inorganic phosphate, the committed step in the de novo pyrimidine nucleotide biosynthesis pathway. The protein is Aspartate carbamoyltransferase catalytic subunit of Anaplasma marginale (strain St. Maries).